Here is a 240-residue protein sequence, read N- to C-terminus: B-cell receptor-associated protein 29 (240 aa).

Residues 1–6 (MTLQWT) are Lumenal-facing. The helical transmembrane segment at 7-27 (AVATFLYAEIGLILIFCLPFI) threads the bilayer. Residues 28–43 (PPQRWQKIFSFSVWGK) lie on the Cytoplasmic side of the membrane. A helical transmembrane segment spans residues 44-64 (IASFWNKAFLTIIILLIVLFL). The Lumenal portion of the chain corresponds to 65 to 103 (DAVREVRKYSSTHTIEKSSASRPAAYEHTQMKLFRSQRN). A helical membrane pass occupies residues 104 to 124 (LYISGFSLFFWLVLRRLVTLI). The Cytoplasmic portion of the chain corresponds to 125-240 (TQLAKELSHK…DRAGKDKKCL (116 aa)). Positions 166–233 (GKEEEHILEA…REHSELQDRA (68 aa)) form a coiled coil. The Di-lysine motif signature appears at 237 to 240 (KKCL).

Belongs to the BCAP29/BCAP31 family. As to quaternary structure, homodimer and heterodimer with BCAP31. Binds CASP8 as a complex containing BCAP31, BCAP29, BCL2 and/or BCL2L1. Interacts with VAMP3, VAMP1 and membrane IgD immunoglobulins. May interact with ACTG1 and non-muscle myosin II.

The protein resides in the endoplasmic reticulum membrane. In terms of biological role, may play a role in anterograde transport of membrane proteins from the endoplasmic reticulum to the Golgi. May be involved in CASP8-mediated apoptosis. This chain is B-cell receptor-associated protein 29 (BCAP29), found in Bos taurus (Bovine).